The sequence spans 350 residues: C5a anaphylatoxin chemotactic receptor 1 (350 aa).

Residues 1–36 (APMENSTYDYTNYDSLGTLDPSTPVDNTVRRLRPTT) are Extracellular-facing. A glycan (N-linked (GlcNAc...) asparagine) is linked at N5. Sulfotyrosine occurs at positions 10 and 13. A helical membrane pass occupies residues 37-63 (IVALVIYMAVFLVGVPGNALVVWVTAL). Topologically, residues 64–68 (EAKRT) are cytoplasmic. The chain crosses the membrane as a helical span at residues 69–92 (VNAIWFLNLAVADLLSCLALPILF). Residues 93 to 109 (VSIIQEGHWPFGRAACS) lie on the Extracellular side of the membrane. A disulfide bond links C108 and C187. The chain crosses the membrane as a helical span at residues 110–131 (VLPSLILLNMYASILLLATISA). At 132–152 (DRFLLVFNPIWCQNTRGAGLA) the chain is on the cytoplasmic side. Residues 153 to 173 (WLACCVAWGLALLLTIPSFLY) traverse the membrane as a helical segment. The Extracellular segment spans residues 174–200 (RKVLQDDYPPKTTCGVDYGHEGVRAER). Residues 201–226 (AVAIVRLVVGFLLPLFTLSVCYTFLL) traverse the membrane as a helical segment. Residues 227–242 (LRTWSRNGTRSTKTLK) are Cytoplasmic-facing. The chain crosses the membrane as a helical span at residues 243-265 (VVVAVVVSFFIFWLPYQVMGMIL). Topologically, residues 266–282 (ALLHPSSATFRWAIRLD) are extracellular. A helical transmembrane segment spans residues 283-303 (PLCIALAYVNCCINPIIYVVA). The Cytoplasmic segment spans residues 304–350 (GKGFQGQLRKSLPSLLRNVLAEESVIQGSKSFSRSTVDTVADKCQAV). Phosphoserine is present on residues S314, S317, S327, S332, S334, and S338.

The protein belongs to the G-protein coupled receptor 1 family. Homodimer. May also form higher-order oligomers. Interacts (when phosphorylated) with ARRB1 and ARRB2; the interaction is associated with internalization of C5aR. Sulfation plays a critical role in the association of C5aR with C5a, but no significant role in the ability of the receptor to transduce a signal and mobilize calcium in response to a small peptide agonist. Post-translationally, phosphorylated on serine residues in response to C5a binding, resulting in internalization of the receptor and short-term desensitization to C5a.

The protein resides in the cell membrane. It is found in the cytoplasmic vesicle. In terms of biological role, receptor for the chemotactic and inflammatory peptide anaphylatoxin C5a. The ligand interacts with at least two sites on the receptor: a high-affinity site on the extracellular N-terminus, and a second site in the transmembrane region which activates downstream signaling events. Receptor activation stimulates chemotaxis, granule enzyme release, intracellular calcium release and superoxide anion production. The polypeptide is C5a anaphylatoxin chemotactic receptor 1 (C5AR1) (Oryctolagus cuniculus (Rabbit)).